Consider the following 456-residue polypeptide: MLNSAMSVVILAAGKGTRMYSDIPKVLHTLAGKPMVQHVIDAATKLGAAQVHLVYGHGGELLKQTLKDDKLNWVLQAEQLGTGHAMQQAAPFFSDDEDILMLYGDVPLISVETLQRLRDAKPQGGIGLLTVKLDDPSGYGRITRENGKVTGIVEHKDATDEQRQIQEINTGILIANGADLKRWLSKLTNNNAQGEYYITDIIALAYHEGREIAAVHPARISETDGVNNRLQLSRLERIYQAEQAEKLLLSGVMLRDPARFDLRGNLAHGRDVEIDANVIIEGNVTLGHRVKIGAGCIIKNSVIGDDCEISPYSVVEDAHLEAACTIGPFARLRPGAELLAGAHVGNFVEMKKARLGKGSKAGHLTYLGDAEIGDNVNIGAGTITCNYDGANKFKTVIGDDVFVGSDTQLVAPVTVGKGATIAAGTTVTRNVADNELVLSRVPQVHKQGWQRPVKKK.

Residues 1-229 (MLNSAMSVVI…ISETDGVNNR (229 aa)) are pyrophosphorylase. UDP-N-acetyl-alpha-D-glucosamine-binding positions include 11–14 (LAAG), Lys-25, Gln-76, 81–82 (GT), 103–105 (YGD), Gly-140, Glu-154, Asn-169, and Asn-227. Residue Asp-105 participates in Mg(2+) binding. A Mg(2+)-binding site is contributed by Asn-227. The interval 230 to 250 (LQLSRLERIYQAEQAEKLLLS) is linker. Residues 251-456 (GVMLRDPARF…QGWQRPVKKK (206 aa)) are N-acetyltransferase. Positions 333 and 351 each coordinate UDP-N-acetyl-alpha-D-glucosamine. His-363 acts as the Proton acceptor in catalysis. 2 residues coordinate UDP-N-acetyl-alpha-D-glucosamine: Tyr-366 and Asn-377. Acetyl-CoA contacts are provided by residues Ala-380, 386–387 (NY), Ser-405, Ala-423, and Arg-440.

This sequence in the N-terminal section; belongs to the N-acetylglucosamine-1-phosphate uridyltransferase family. In the C-terminal section; belongs to the transferase hexapeptide repeat family. As to quaternary structure, homotrimer. The cofactor is Mg(2+).

The protein localises to the cytoplasm. The catalysed reaction is alpha-D-glucosamine 1-phosphate + acetyl-CoA = N-acetyl-alpha-D-glucosamine 1-phosphate + CoA + H(+). The enzyme catalyses N-acetyl-alpha-D-glucosamine 1-phosphate + UTP + H(+) = UDP-N-acetyl-alpha-D-glucosamine + diphosphate. It participates in nucleotide-sugar biosynthesis; UDP-N-acetyl-alpha-D-glucosamine biosynthesis; N-acetyl-alpha-D-glucosamine 1-phosphate from alpha-D-glucosamine 6-phosphate (route II): step 2/2. The protein operates within nucleotide-sugar biosynthesis; UDP-N-acetyl-alpha-D-glucosamine biosynthesis; UDP-N-acetyl-alpha-D-glucosamine from N-acetyl-alpha-D-glucosamine 1-phosphate: step 1/1. Its pathway is bacterial outer membrane biogenesis; LPS lipid A biosynthesis. In terms of biological role, catalyzes the last two sequential reactions in the de novo biosynthetic pathway for UDP-N-acetylglucosamine (UDP-GlcNAc). The C-terminal domain catalyzes the transfer of acetyl group from acetyl coenzyme A to glucosamine-1-phosphate (GlcN-1-P) to produce N-acetylglucosamine-1-phosphate (GlcNAc-1-P), which is converted into UDP-GlcNAc by the transfer of uridine 5-monophosphate (from uridine 5-triphosphate), a reaction catalyzed by the N-terminal domain. The protein is Bifunctional protein GlmU of Salmonella schwarzengrund (strain CVM19633).